A 227-amino-acid chain; its full sequence is AN1-type zinc finger protein 3 (227 aa).

An A20-type zinc finger spans residues 12–44 (PSLPPRCPCGFWGSSKTMNLCSKCFADFQKKQP). Cysteine 18, cysteine 20, cysteine 32, and cysteine 35 together coordinate Zn(2+). Disordered stretches follow at residues 41–99 (KKQP…TEEC) and 113–151 (PTKR…RSKQ). 2 stretches are compositionally biased toward low complexity: residues 49-59 (TPSTSNSQSDL) and 66-77 (SDNNNTSVTTPT). Polar residues-rich tracts occupy residues 78–96 (LSPS…SPST) and 113–127 (PTKR…SENE). Over residues 135 to 148 (RLVENPERPEESGR) the composition is skewed to basic and acidic residues. An AN1-type zinc finger spans residues 151-200 (QKSRRRCFQCQTKLELVQQELGSCRCGYVFCMLHRLPEQHDCTFDHMGRG). Zn(2+) is bound by residues cysteine 157, cysteine 160, cysteine 174, cysteine 176, cysteine 181, histidine 184, histidine 190, and cysteine 192.

Expressed in testis.

The polypeptide is AN1-type zinc finger protein 3 (Zfand3) (Mus musculus (Mouse)).